A 777-amino-acid polypeptide reads, in one-letter code: Aminopeptidase P (777 aa).

The signal sequence occupies residues 1 to 17 (MQLNFLLFVFIFLMVFH). His551 contributes to the substrate binding site. Mn(2+)-binding residues include Asp570 and Asp581. His640 lines the substrate pocket. His644 is a binding site for Mn(2+). Residue His653 coordinates substrate. Glu676 and Glu690 together coordinate Mn(2+).

Belongs to the peptidase M24B family. Homodimer. Mn(2+) serves as cofactor. Post-translationally, the N-terminus may be proteolytically cleaved to generate a 73-kDa mature form.

The protein localises to the vacuole lumen. It is found in the cytoplasm. The enzyme catalyses Release of any N-terminal amino acid, including proline, that is linked to proline, even from a dipeptide or tripeptide.. Its activity is regulated as follows. Partially activated by Co(2+) and Mg(2+) has no effect. Inhibited by 1 mM Zn(2+), Ni(2+), or Cu(2+). Inhibited by apstatin, a non-hydrolysable peptide analog. Functionally, catalyzes the removal of a penultimate prolyl residue from the N-termini of peptides. In the food vacuole, involved in the final step of host hemoglobin catabolism, by cleaving hemoglobin-derived oligopeptides. In the cytoplasm, may be involved in the last steps of the turnover of ubiquitinated proteins. This chain is Aminopeptidase P, found in Plasmodium falciparum (isolate 3D7).